We begin with the raw amino-acid sequence, 159 residues long: Probable carbonic anhydrase (159 aa).

Substrate is bound by residues 33-35 (RGD) and 48-49 (QD). Zn(2+) contacts are provided by H54, H71, and H76.

Belongs to the gamma-class carbonic anhydrase family. Requires Zn(2+) as cofactor.

The enzyme catalyses hydrogencarbonate + H(+) = CO2 + H2O. Probably reversibly hydrates carbon dioxide. This chain is Probable carbonic anhydrase, found in Methanocaldococcus jannaschii (strain ATCC 43067 / DSM 2661 / JAL-1 / JCM 10045 / NBRC 100440) (Methanococcus jannaschii).